The following is a 273-amino-acid chain: L-cysteine S-thiosulfotransferase subunit SoxA (273 aa).

A signal peptide spans 1–24 (MKKTVTAVALLCALSSTAIAPTFA). A disulfide bridge links C74 with C110. Residues 162–273 (EMYELGKRMF…GVMLTPGIKR (112 aa)) enclose the Cytochrome c domain. Residues C182 and H186 each coordinate heme. R230 is a binding site for substrate. C234 contributes to the heme binding site. Residue C234 is the Cysteine persulfide intermediate of the active site.

This sequence belongs to the SoxA family. As to quaternary structure, heterodimer of SoxA and SoxX. Heme is required as a cofactor. Post-translationally, cysteine persulfide at Cys-234.

The protein localises to the periplasm. The catalysed reaction is L-cysteinyl-[SoxY protein] + thiosulfate + 2 Fe(III)-[cytochrome c] = S-sulfosulfanyl-L-cysteinyl-[SoxY protein] + 2 Fe(II)-[cytochrome c] + 2 H(+). It catalyses the reaction S-sulfanyl-L-cysteinyl-[SoxY protein] + thiosulfate + 2 Fe(III)-[cytochrome c] = S-(2-sulfodisulfanyl)-L-cysteinyl-[SoxY protein] + 2 Fe(II)-[cytochrome c] + 2 H(+). Its function is as follows. C-type monoheme cytochrome, which is part of the SoxAX cytochrome complex involved in sulfur oxidation. The SoxAX complex catalyzes the formation of a heterodisulfide bond between the conserved cysteine residue on a sulfur carrier SoxYZ complex subunit SoxY and thiosulfate or other inorganic sulfur substrates. This leads to the liberation of two electrons, which may be transferred from the SoxAX complex to another cytochrome c that then channels them into the respiratory electron transport chain. Some electrons may be used for reductive CO(2) fixation. In Hydrogenophilus thermoluteolus (Pseudomonas hydrogenothermophila), this protein is L-cysteine S-thiosulfotransferase subunit SoxA.